The chain runs to 269 residues: Formamidopyrimidine-DNA glycosylase (269 aa).

The active-site Schiff-base intermediate with DNA is the Pro2. The active-site Proton donor is the Glu3. Lys57 functions as the Proton donor; for beta-elimination activity in the catalytic mechanism. Positions 90, 109, and 150 each coordinate DNA. An FPG-type zinc finger spans residues 235–269 (QVYGRAGEPCRQCGHPIEIAKHGQRSTFFCRHCQH). The active-site Proton donor; for delta-elimination activity is Arg259.

Belongs to the FPG family. As to quaternary structure, monomer. Zn(2+) is required as a cofactor.

The enzyme catalyses Hydrolysis of DNA containing ring-opened 7-methylguanine residues, releasing 2,6-diamino-4-hydroxy-5-(N-methyl)formamidopyrimidine.. It carries out the reaction 2'-deoxyribonucleotide-(2'-deoxyribose 5'-phosphate)-2'-deoxyribonucleotide-DNA = a 3'-end 2'-deoxyribonucleotide-(2,3-dehydro-2,3-deoxyribose 5'-phosphate)-DNA + a 5'-end 5'-phospho-2'-deoxyribonucleoside-DNA + H(+). Its function is as follows. Involved in base excision repair of DNA damaged by oxidation or by mutagenic agents. Acts as a DNA glycosylase that recognizes and removes damaged bases. Has a preference for oxidized purines, such as 7,8-dihydro-8-oxoguanine (8-oxoG). Has AP (apurinic/apyrimidinic) lyase activity and introduces nicks in the DNA strand. Cleaves the DNA backbone by beta-delta elimination to generate a single-strand break at the site of the removed base with both 3'- and 5'-phosphates. The sequence is that of Formamidopyrimidine-DNA glycosylase from Yersinia pseudotuberculosis serotype O:1b (strain IP 31758).